Consider the following 617-residue polypeptide: Syncytin-A (617 aa).

The first 17 residues, 1–17 (MVRPWVFCLLLFPCSSA), serve as a signal peptide directing secretion. Residues 18–544 (YSDSWMPLVN…WIQWLGLGPW (527 aa)) lie on the Extracellular side of the membrane. N-linked (GlcNAc...) asparagine glycosylation is present at N27. A CXXC motif is present at residues 44 to 47 (CWVC). Disulfide bonds link C44-C47, C44-C505, and C497-C504. 2 N-linked (GlcNAc...) asparagine glycosylation sites follow: N272 and N365. A fusion peptide region spans residues 420–440 (LLPLLAGLGIASALGLGIAGI). The short motif at 497–505 (CLFLQEECC) is the CX6CC element. The chain crosses the membrane as a helical span at residues 545–565 (LPSWLTSLMAPILFILVLLVF). Residues 566-617 (RPCLLNCLTHSVSRRMSSFIHTTTEGHVDKILLLRESQYKRLPQEPPEEDAV) are Cytoplasmic-facing.

It belongs to the gamma type-C retroviral envelope protein family. The mature protein consists of a trimer of SU-TM heterodimers. The SU-TM heterodimers are attached by a labile interchain disulfide bond. Synthesized as an inactive precursor that is heavily N-glycosylated and processed likely by furin in the Golgi to yield the mature SU and TM proteins. The cleavage site between SU and TM requires the minimal sequence [KR]-X-[KR]-R. In terms of processing, the CXXC motif is highly conserved across a broad range of retroviral envelope proteins. It is thought to participate in the formation of a labile disulfide bond possibly with the CX6CC motif present in the transmembrane protein. Isomerization of the intersubunit disulfide bond to an SU intrachain disulfide bond is thought to occur upon receptor recognition in order to allow membrane fusion. As to expression, highly expressed in placenta where it localizes to syncytiotrophoblasts of the labyrinthine zona. Specifically localizes to syncytiotrophoblast layer I (SynT-I). Also detected at very low levels in hippocampus, brain, testis and ovary.

The protein localises to the cell membrane. In terms of biological role, this endogenous retroviral envelope protein has retained its original fusogenic properties. Together with Synb, participates in trophoblast fusion and the formation of a syncytium during placenta morphogenesis. Syna is essential for placental development and is specifically required for formation of syncytiotrophoblast layer I (SynT-I). Promotes muscle myoblast fusion. Does not have immunosuppressive activity. In Mus musculus (Mouse), this protein is Syncytin-A.